A 211-amino-acid chain; its full sequence is Thiamine-phosphate synthase (211 aa).

4-amino-2-methyl-5-(diphosphooxymethyl)pyrimidine-binding positions include 43–47 and asparagine 75; that span reads QLRDK. The Mg(2+) site is built by aspartate 76 and aspartate 95. Serine 114 provides a ligand contact to 4-amino-2-methyl-5-(diphosphooxymethyl)pyrimidine. A 2-[(2R,5Z)-2-carboxy-4-methylthiazol-5(2H)-ylidene]ethyl phosphate-binding site is contributed by 140 to 142; it reads TAS. Lysine 143 is a binding site for 4-amino-2-methyl-5-(diphosphooxymethyl)pyrimidine. 2-[(2R,5Z)-2-carboxy-4-methylthiazol-5(2H)-ylidene]ethyl phosphate is bound by residues glycine 170 and 190-191; that span reads IS.

It belongs to the thiamine-phosphate synthase family. The cofactor is Mg(2+).

The enzyme catalyses 2-[(2R,5Z)-2-carboxy-4-methylthiazol-5(2H)-ylidene]ethyl phosphate + 4-amino-2-methyl-5-(diphosphooxymethyl)pyrimidine + 2 H(+) = thiamine phosphate + CO2 + diphosphate. It carries out the reaction 2-(2-carboxy-4-methylthiazol-5-yl)ethyl phosphate + 4-amino-2-methyl-5-(diphosphooxymethyl)pyrimidine + 2 H(+) = thiamine phosphate + CO2 + diphosphate. The catalysed reaction is 4-methyl-5-(2-phosphooxyethyl)-thiazole + 4-amino-2-methyl-5-(diphosphooxymethyl)pyrimidine + H(+) = thiamine phosphate + diphosphate. It functions in the pathway cofactor biosynthesis; thiamine diphosphate biosynthesis; thiamine phosphate from 4-amino-2-methyl-5-diphosphomethylpyrimidine and 4-methyl-5-(2-phosphoethyl)-thiazole: step 1/1. Functionally, condenses 4-methyl-5-(beta-hydroxyethyl)thiazole monophosphate (THZ-P) and 2-methyl-4-amino-5-hydroxymethyl pyrimidine pyrophosphate (HMP-PP) to form thiamine monophosphate (TMP). The protein is Thiamine-phosphate synthase of Coprothermobacter proteolyticus (strain ATCC 35245 / DSM 5265 / OCM 4 / BT).